A 296-amino-acid polypeptide reads, in one-letter code: Glycine--tRNA ligase alpha subunit (296 aa).

The protein belongs to the class-II aminoacyl-tRNA synthetase family. As to quaternary structure, tetramer of two alpha and two beta subunits.

The protein localises to the cytoplasm. The catalysed reaction is tRNA(Gly) + glycine + ATP = glycyl-tRNA(Gly) + AMP + diphosphate. The polypeptide is Glycine--tRNA ligase alpha subunit (Listeria innocua serovar 6a (strain ATCC BAA-680 / CLIP 11262)).